The chain runs to 475 residues: Sulfate adenylyltransferase subunit 1 (475 aa).

The tr-type G domain maps to 25–239; sequence KSLLRFLTCG…EVLETVEIQR (215 aa). Residues 34-41 form a G1 region; sequence GSVDDGKS. 34–41 contacts GTP; that stretch reads GSVDDGKS. The tract at residues 92–96 is G2; the sequence is GITID. A G3 region spans residues 113-116; that stretch reads DTPG. GTP contacts are provided by residues 113–117 and 168–171; these read DTPGH and NKMD. The segment at 168 to 171 is G4; sequence NKMD. Residues 206-208 form a G5 region; it reads SAL.

The protein belongs to the TRAFAC class translation factor GTPase superfamily. Classic translation factor GTPase family. CysN/NodQ subfamily. Heterodimer composed of CysD, the smaller subunit, and CysN.

The enzyme catalyses sulfate + ATP + H(+) = adenosine 5'-phosphosulfate + diphosphate. Its pathway is sulfur metabolism; hydrogen sulfide biosynthesis; sulfite from sulfate: step 1/3. In terms of biological role, with CysD forms the ATP sulfurylase (ATPS) that catalyzes the adenylation of sulfate producing adenosine 5'-phosphosulfate (APS) and diphosphate, the first enzymatic step in sulfur assimilation pathway. APS synthesis involves the formation of a high-energy phosphoric-sulfuric acid anhydride bond driven by GTP hydrolysis by CysN coupled to ATP hydrolysis by CysD. The polypeptide is Sulfate adenylyltransferase subunit 1 (Shigella boydii serotype 18 (strain CDC 3083-94 / BS512)).